We begin with the raw amino-acid sequence, 756 residues long: Amine oxidase [copper-containing] 2 (756 aa).

At 1 to 4 the chain is on the cytoplasmic side; that stretch reads MHLK. Residues 5 to 25 form a helical membrane-spanning segment; sequence IVLAFLALSLITIFALAYVLL. The Extracellular segment spans residues 26-756; sequence TSPGGSSQPP…DLPPFSYHGF (731 aa). N-linked (GlcNAc...) asparagine glycans are attached at residues Asn133, Asn198, and Asn226. Asp380 acts as the Proton acceptor in catalysis. The cysteines at positions 398 and 424 are disulfide-linked. The Schiff-base intermediate with substrate; via topaquinone role is filled by Tyr465. Tyr465 carries the 2',4',5'-topaquinone modification. Positions 516 and 518 each coordinate Cu(2+). Ca(2+)-binding residues include Asp525, Leu526, Asp527, Glu568, Glu637, Phe659, and Asn661. The N-linked (GlcNAc...) asparagine glycan is linked to Asn662. Residues Glu663, Asp669, and Leu670 each coordinate Ca(2+). His680 is a Cu(2+) binding site. Cys730 and Cys737 are oxidised to a cystine.

It belongs to the copper/topaquinone oxidase family. In terms of assembly, homodimer; disulfide-linked. Probably forms heterodimers with AOC3. Requires Cu(2+) as cofactor. The cofactor is Ca(2+). L-topaquinone is required as a cofactor. In terms of processing, topaquinone (TPQ) is generated by copper-dependent autoxidation of a specific tyrosyl residue. In terms of tissue distribution, expressed in many tissues including adipocytes with higher expression in retina where it is active. Not expressed in testis. As to expression, not expressed in thymus.

Its subcellular location is the cell membrane. The protein resides in the cytoplasm. The enzyme catalyses 2-phenylethylamine + O2 + H2O = 2-phenylacetaldehyde + H2O2 + NH4(+). It catalyses the reaction tryptamine + O2 + H2O = indole-3-acetaldehyde + H2O2 + NH4(+). The catalysed reaction is tyramine + O2 + H2O = (4-hydroxyphenyl)acetaldehyde + H2O2 + NH4(+). Catalyzes the oxidative deamination of primary amines to the corresponding aldehydes with the concomitant production of hydrogen peroxide and ammonia. Has a preference for 2-phenylethylamine, tryptamine and tyramine. Could also act on methylamine and benzylamine but much less efficiently. The sequence is that of Amine oxidase [copper-containing] 2 from Homo sapiens (Human).